Consider the following 143-residue polypeptide: Protein Wnt-1 (143 aa).

The O-palmitoleoyl serine; by PORCN moiety is linked to residue S1. The interval 38-81 (EGVRGNSNRGDRGDRRDRGDRSDNGGTEANFQPYNSNHKPPGPR) is disordered. Positions 46 to 60 (RGDRGDRRDRGDRSD) are enriched in basic and acidic residues. A compositionally biased stretch (polar residues) spans 64 to 75 (TEANFQPYNSNH). A disulfide bond links C109 and C124. N-linked (GlcNAc...) asparagine glycans are attached at residues N110 and N111.

Belongs to the Wnt family. In terms of processing, palmitoleoylation is required for efficient binding to frizzled receptors. Palmitoleoylation is necessary for proper trafficking to cell surface. Depalmitoleoylated by NOTUM, leading to inhibit Wnt signaling pathway.

The protein resides in the secreted. It is found in the extracellular space. The protein localises to the extracellular matrix. Functionally, ligand for members of the frizzled family of seven transmembrane receptors. Probable developmental protein. The sequence is that of Protein Wnt-1 (WNT-1) from Evasterias troschelii (Mottled sea star).